The chain runs to 206 residues: Probable N-acetyltransferase 14 (206 aa).

Residues 55-206 (LRFVLASFAL…TLVREFSKDL (152 aa)) enclose the N-acetyltransferase domain. The helical transmembrane segment at 57 to 77 (FVLASFALALLLPVFLAVTAV) threads the bilayer.

The protein belongs to the camello family.

Its subcellular location is the membrane. Functionally, probable acetyltransferase. May act as a transcription factor regulating the expression of coproporphyrinogen oxidase by binding to a promoter regulatory element. In Macaca fascicularis (Crab-eating macaque), this protein is Probable N-acetyltransferase 14 (NAT14).